Here is a 78-residue protein sequence, read N- to C-terminus: TP53-regulated inhibitor of apoptosis 1-A (78 aa).

A coiled-coil region spans residues 1–52; sequence MNSVGEECTDMKRDYDQCFNRWFAEKFLKGAGSGDPCTELFRRYRECVQKAI. The region spanning 5-55 is the CHCH domain; it reads GEECTDMKRDYDQCFNRWFAEKFLKGAGSGDPCTELFRRYRECVQKAIKDK. Short sequence motifs (cx9C motif) lie at residues 8-18 and 37-47; these read CTDMKRDYDQC and CTELFRRYREC. 2 disulfide bridges follow: Cys-8-Cys-47 and Cys-18-Cys-37.

It belongs to the TRIAP1/MDM35 family. In terms of assembly, monomer. Forms a complex with prelid1 in the mitochondrion intermembrane space. Interacts with prelid3a.

Its subcellular location is the mitochondrion. The protein resides in the mitochondrion intermembrane space. The catalysed reaction is a 1,2-diacyl-sn-glycero-3-phosphate(in) = a 1,2-diacyl-sn-glycero-3-phosphate(out). Functionally, involved in the modulation of the mitochondrial apoptotic pathway by ensuring the accumulation of cardiolipin (CL) in mitochondrial membranes. The triap1:prelid1 complex probably functions as a phosphatidic acid (PA) transporter across the mitochondrion intermembrane space to provide PA for cardiolipin CL synthesis in the inner membrane. Likewise, the triap1:prelid3a complex mediates the transfer of phosphatidic acid (PA) between liposomes (in vitro) and probably functions as a PA transporter across the mitochondrion intermembrane space (in vivo). Mediates cell survival by inhibiting activation of caspase-9 which prevents induction of apoptosis. Required for pronephros development; probably involved at an early stage in the formation of pronephric components derived from the somatic layer. The protein is TP53-regulated inhibitor of apoptosis 1-A (triap1-a) of Xenopus laevis (African clawed frog).